Consider the following 144-residue polypeptide: Large ribosomal subunit protein uL15 (144 aa).

The segment covering 1-13 (MKLNELKPAEGSR) has biased composition (basic and acidic residues). The tract at residues 1–47 (MKLNELKPAEGSRKVRNRVGRGDSSGNGKTAGRGQKGQKARSKTRLG) is disordered. Over residues 23-35 (DSSGNGKTAGRGQ) the composition is skewed to gly residues.

The protein belongs to the universal ribosomal protein uL15 family. In terms of assembly, part of the 50S ribosomal subunit.

Binds to the 23S rRNA. This Levilactobacillus brevis (strain ATCC 367 / BCRC 12310 / CIP 105137 / JCM 1170 / LMG 11437 / NCIMB 947 / NCTC 947) (Lactobacillus brevis) protein is Large ribosomal subunit protein uL15.